The primary structure comprises 419 residues: Hyaluronan synthase (419 aa).

5 consecutive transmembrane segments (helical) span residues 8 to 28 (LIVL…MYLF), 33 to 53 (VGIY…LSFL), 318 to 338 (IVAL…VAIG), 345 to 365 (AIQL…IVAL), and 376 to 396 (PASF…LQPL).

Belongs to the NodC/HAS family. Mg(2+) is required as a cofactor.

The protein localises to the cell membrane. It carries out the reaction [hyaluronan](n) + UDP-N-acetyl-alpha-D-glucosamine = N-acetyl-beta-D-glucosaminyl-(1-&gt;4)-[hyaluronan](n) + UDP + H(+). The enzyme catalyses N-acetyl-beta-D-glucosaminyl-(1-&gt;4)-[hyaluronan](n) + UDP-alpha-D-glucuronate = [hyaluronan](n+1) + UDP + H(+). The protein operates within glycan biosynthesis; hyaluronan biosynthesis. Glycosaminoglycan synthesis. The hyaluronic acid capsule is involved in the pathogenicity of group A Streptococci; it may be the major virulence determinant. This chain is Hyaluronan synthase (hasA), found in Streptococcus pyogenes serotype M6 (strain ATCC BAA-946 / MGAS10394).